We begin with the raw amino-acid sequence, 234 residues long: Probable transcriptional regulatory protein Psyr_3028 (234 aa).

It belongs to the TACO1 family.

Its subcellular location is the cytoplasm. This Pseudomonas syringae pv. syringae (strain B728a) protein is Probable transcriptional regulatory protein Psyr_3028.